The sequence spans 418 residues: Gamma-glutamyl phosphate reductase (418 aa).

Belongs to the gamma-glutamyl phosphate reductase family.

Its subcellular location is the cytoplasm. The enzyme catalyses L-glutamate 5-semialdehyde + phosphate + NADP(+) = L-glutamyl 5-phosphate + NADPH + H(+). It participates in amino-acid biosynthesis; L-proline biosynthesis; L-glutamate 5-semialdehyde from L-glutamate: step 2/2. Catalyzes the NADPH-dependent reduction of L-glutamate 5-phosphate into L-glutamate 5-semialdehyde and phosphate. The product spontaneously undergoes cyclization to form 1-pyrroline-5-carboxylate. This Lacticaseibacillus paracasei (strain ATCC 334 / BCRC 17002 / CCUG 31169 / CIP 107868 / KCTC 3260 / NRRL B-441) (Lactobacillus paracasei) protein is Gamma-glutamyl phosphate reductase.